A 595-amino-acid polypeptide reads, in one-letter code: Merlin (595 aa).

Serine 13 bears the Phosphoserine mark. The FERM domain maps to 22 to 311; the sequence is FTVRIVTMDA…GNHDLFMRRR (290 aa). The residue at position 518 (serine 518) is a Phosphoserine; by PAK.

As to quaternary structure, interacts with NHERF1, HGS and AGAP2. Interacts with LAYN. Interacts with SGSM3. Interacts (via FERM domain) with MPP1. Interacts with WWC1. Interacts with the CUL4A-RBX1-DDB1-VprBP/DCAF1 E3 ubiquitin-protein ligase complex. The unphosphorylated form interacts (via FERM domain) with VPRBP/DCAF1. Interacts (via FERM domain) with NOP53; the interaction is direct. Interacts with SCHIP1; the interaction is direct. Post-translationally, phosphorylation of Ser-518 inhibits nuclear localization by disrupting the intramolecular association of the FERM domain with the C-terminal tail. The dephosphorylation of Ser-518 favors the interaction with NOP53. Ubiquitinated by the CUL4A-RBX1-DDB1-DCAF1/VprBP E3 ubiquitin-protein ligase complex for ubiquitination and subsequent proteasome-dependent degradation. In terms of tissue distribution, widely expressed. Isoform 1 and isoform 3 are predominant. Isoform 4, isoform 5 and isoform 6 are expressed moderately. Isoform 8 is found at low frequency. Isoform 7, isoform 9 and isoform 10 are not expressed in adult tissues, with the exception of adult retina expressing isoform 10. Isoform 9 is faintly expressed in fetal brain, heart, lung, skeletal muscle and spleen. Fetal thymus expresses isoforms 1, 7, 9 and 10 at similar levels.

It is found in the cell projection. The protein resides in the filopodium membrane. Its subcellular location is the ruffle membrane. It localises to the nucleus. The protein localises to the cytoplasm. It is found in the perinuclear region. The protein resides in the cytoplasmic granule. Its subcellular location is the cytoskeleton. Functionally, probable regulator of the Hippo/SWH (Sav/Wts/Hpo) signaling pathway, a signaling pathway that plays a pivotal role in tumor suppression by restricting proliferation and promoting apoptosis. Along with WWC1 can synergistically induce the phosphorylation of LATS1 and LATS2 and can probably function in the regulation of the Hippo/SWH (Sav/Wts/Hpo) signaling pathway. May act as a membrane stabilizing protein. May inhibit PI3 kinase by binding to AGAP2 and impairing its stimulating activity. Suppresses cell proliferation and tumorigenesis by inhibiting the CUL4A-RBX1-DDB1-VprBP/DCAF1 E3 ubiquitin-protein ligase complex. In Homo sapiens (Human), this protein is Merlin (NF2).